A 192-amino-acid polypeptide reads, in one-letter code: Casparian strip membrane protein 2 (192 aa).

The Cytoplasmic portion of the chain corresponds to 1 to 31; sequence MTKDVVVEHGESSKAPLVAAPAASGVGRAAS. The helical transmembrane segment at 32 to 52 threads the bilayer; sequence VADVFLRFLAIVGTIASAISM. Residues 53-79 are Extracellular-facing; that stretch reads GTTNETLPFFTQFIQFEAKYSDLPSFT. A glycan (N-linked (GlcNAc...) asparagine) is linked at N56. A helical transmembrane segment spans residues 80 to 100; sequence FFVAANAVVCTYLVLSIPLSI. The Cytoplasmic portion of the chain corresponds to 101–112; it reads VHIVRPRARYSR. Residues 113-133 traverse the membrane as a helical segment; that stretch reads LVLVFFDAAMLTLLTAGASAA. Topologically, residues 134-166 are extracellular; that stretch reads AAIVYLAHKGNVRANWFAICQQFDSFCERISGS. A helical membrane pass occupies residues 167 to 187; it reads LIGSFAAMVLLIMLIFLSAFA. The Cytoplasmic segment spans residues 188 to 192; it reads LARRH.

This sequence belongs to the Casparian strip membrane proteins (CASP) family. Homodimer and heterodimers.

The protein localises to the cell membrane. Functionally, regulates membrane-cell wall junctions and localized cell wall deposition. Required for establishment of the Casparian strip membrane domain (CSD) and the subsequent formation of Casparian strips, a cell wall modification of the root endodermis that determines an apoplastic barrier between the intraorganismal apoplasm and the extraorganismal apoplasm and prevents lateral diffusion. The chain is Casparian strip membrane protein 2 from Panicum virgatum (Blackwell switchgrass).